A 73-amino-acid chain; its full sequence is Antimicrobial peptide 6 (73 aa).

A signal peptide spans Met-1–Ala-22. Positions Glu-45–Tyr-73 are excised as a propeptide.

This sequence belongs to the non-disulfide-bridged peptide (NDBP) superfamily. Short antimicrobial peptide (group 4) family. In terms of tissue distribution, expressed by the venom gland.

Its subcellular location is the secreted. Its function is as follows. Antibacterial peptide. The sequence is that of Antimicrobial peptide 6 from Tityus costatus (Brazilian scorpion).